A 135-amino-acid polypeptide reads, in one-letter code: Ribosomal RNA large subunit methyltransferase H (135 aa).

S-adenosyl-L-methionine-binding positions include Leu52, Gly83, and 102–107 (LSSLTL).

It belongs to the RNA methyltransferase RlmH family. As to quaternary structure, homodimer.

It is found in the cytoplasm. The catalysed reaction is pseudouridine(1915) in 23S rRNA + S-adenosyl-L-methionine = N(3)-methylpseudouridine(1915) in 23S rRNA + S-adenosyl-L-homocysteine + H(+). In terms of biological role, specifically methylates the pseudouridine at position 1915 (m3Psi1915) in 23S rRNA. The protein is Ribosomal RNA large subunit methyltransferase H of Polynucleobacter necessarius subsp. necessarius (strain STIR1).